The following is a 447-amino-acid chain: MIKIKKGLNLPIAGRPEQVIYDGPVITEVALLGEEYAGMRPSMKVKEGDAVKKGQVLFEDKKNPGVVFTAPVSGKIAAIHRGEKRVLQSVVIAVEGNDEIEFERYAPEALANLSGEEVRRNLIQSGLWTALRTRPFSKIPAVDAEPFAIFVNAMDTNPLAADPVVVIKEAAEDFRRGLLVLSRLTERKIHVCKAAGADVPSENAANIETHEFGGPHPAGLSGTHIHFIEPVGANKTVWTINYQDVIAIGRLFATGRLNTERVIALGGSQVNKPRLLRTVLGAKVSQITAGELVDADNRVISGSVLNGAITQGAHDYLGRYHNQISVIEEGRSKELFGWVAPQPDKYSITRTTLGHFLKNKLFKFTTAVNGGDRAMVPIGTYERVMPLDILPTLLLRDLIVGDTDSAQALGCLELDEEDLALCSFVCPGKYEYGPLLRKVLETIEKEG.

This sequence belongs to the NqrA family. Composed of six subunits; NqrA, NqrB, NqrC, NqrD, NqrE and NqrF.

The enzyme catalyses a ubiquinone + n Na(+)(in) + NADH + H(+) = a ubiquinol + n Na(+)(out) + NAD(+). In terms of biological role, NQR complex catalyzes the reduction of ubiquinone-1 to ubiquinol by two successive reactions, coupled with the transport of Na(+) ions from the cytoplasm to the periplasm. NqrA to NqrE are probably involved in the second step, the conversion of ubisemiquinone to ubiquinol. This chain is Na(+)-translocating NADH-quinone reductase subunit A, found in Neisseria meningitidis serogroup A / serotype 4A (strain DSM 15465 / Z2491).